Reading from the N-terminus, the 278-residue chain is NADPH-dependent 7-cyano-7-deazaguanine reductase (278 aa).

Residue 87 to 89 participates in substrate binding; it reads IES. Residue 89–90 participates in NADPH binding; sequence SK. C185 serves as the catalytic Thioimide intermediate. The Proton donor role is filled by D192. Residue 224–225 participates in substrate binding; sequence HE. An NADPH-binding site is contributed by 253–254; that stretch reads RG. A disordered region spans residues 255–278; sequence GLDINPYRSTNPTFSVQNHRSFRQ. Residues 261-278 are compositionally biased toward polar residues; sequence YRSTNPTFSVQNHRSFRQ.

This sequence belongs to the GTP cyclohydrolase I family. QueF type 2 subfamily. In terms of assembly, homodimer.

The protein localises to the cytoplasm. It catalyses the reaction 7-aminomethyl-7-carbaguanine + 2 NADP(+) = 7-cyano-7-deazaguanine + 2 NADPH + 3 H(+). It participates in tRNA modification; tRNA-queuosine biosynthesis. In terms of biological role, catalyzes the NADPH-dependent reduction of 7-cyano-7-deazaguanine (preQ0) to 7-aminomethyl-7-deazaguanine (preQ1). The sequence is that of NADPH-dependent 7-cyano-7-deazaguanine reductase from Coxiella burnetii (strain CbuG_Q212) (Coxiella burnetii (strain Q212)).